A 284-amino-acid chain; its full sequence is Undecaprenyl-diphosphatase (284 aa).

A run of 8 helical transmembrane segments spans residues 1–21 (MNWL…FLPV), 43–63 (ITAF…LYFW), 88–108 (YTLG…GLVF), 116–136 (LSSL…MWLG), 149–169 (IGIV…LFPG), 193–213 (LSFF…SVSA), 225–245 (VAIG…VAYV), and 259–279 (FTGF…LILS).

This sequence belongs to the UppP family.

Its subcellular location is the cell membrane. It catalyses the reaction di-trans,octa-cis-undecaprenyl diphosphate + H2O = di-trans,octa-cis-undecaprenyl phosphate + phosphate + H(+). In terms of biological role, catalyzes the dephosphorylation of undecaprenyl diphosphate (UPP). Confers resistance to bacitracin. The polypeptide is Undecaprenyl-diphosphatase (Cutibacterium acnes (strain DSM 16379 / KPA171202) (Propionibacterium acnes)).